The sequence spans 510 residues: Putative thymidine phosphorylase (510 aa).

Belongs to the thymidine/pyrimidine-nucleoside phosphorylase family. Type 2 subfamily.

The catalysed reaction is thymidine + phosphate = 2-deoxy-alpha-D-ribose 1-phosphate + thymine. The polypeptide is Putative thymidine phosphorylase (Nitrobacter hamburgensis (strain DSM 10229 / NCIMB 13809 / X14)).